A 398-amino-acid polypeptide reads, in one-letter code: Arylacetamide deacetylase (398 aa).

At 1–5 the chain is on the cytoplasmic side; the sequence is MGRTI. Residues 6-26 form a helical; Signal-anchor for type II membrane protein membrane-spanning segment; that stretch reads FLLISVVLVAYYIYIPLPDDI. Residues 27–398 are Lumenal-facing; it reads EEPWKIILGN…QYLNWLHKNL (372 aa). N77 is a glycosylation site (N-linked (GlcNAc...) asparagine). The Involved in the stabilization of the negatively charged intermediate by the formation of the oxyanion hole signature appears at 110–112; it reads HGG. C115 and C339 are joined by a disulfide. S188 is a catalytic residue. Residues N192, N281, and N324 are each glycosylated (N-linked (GlcNAc...) asparagine). Active-site residues include D342 and H372.

It belongs to the 'GDXG' lipolytic enzyme family. In terms of tissue distribution, highest levels in liver with lower levels in jejunum, kidney and testis.

The protein localises to the endoplasmic reticulum membrane. The protein resides in the microsome membrane. It carries out the reaction a triacylglycerol + H2O = a diacylglycerol + a fatty acid + H(+). In terms of biological role, displays cellular triglyceride lipase activity in liver, increases the levels of intracellular fatty acids derived from the hydrolysis of newly formed triglyceride stores and plays a role in very low-density lipoprotein assembly. Displays serine esterase activity in liver. Deacetylates a variety of arylacetamide substrates, including xenobiotic compounds and procarcinogens, converting them to the primary arylamide compounds and increasing their toxicity. The chain is Arylacetamide deacetylase (Aadac) from Rattus norvegicus (Rat).